We begin with the raw amino-acid sequence, 209 residues long: Orotate phosphoribosyltransferase (209 aa).

5-phospho-alpha-D-ribose 1-diphosphate-binding positions include Arg96, Lys100, His102, and 122 to 130 (EDLISTGGS). An orotate-binding site is contributed by Ser126.

The protein belongs to the purine/pyrimidine phosphoribosyltransferase family. PyrE subfamily. Homodimer. The cofactor is Mg(2+).

The catalysed reaction is orotidine 5'-phosphate + diphosphate = orotate + 5-phospho-alpha-D-ribose 1-diphosphate. It participates in pyrimidine metabolism; UMP biosynthesis via de novo pathway; UMP from orotate: step 1/2. In terms of biological role, catalyzes the transfer of a ribosyl phosphate group from 5-phosphoribose 1-diphosphate to orotate, leading to the formation of orotidine monophosphate (OMP). This chain is Orotate phosphoribosyltransferase, found in Streptococcus pyogenes serotype M3 (strain ATCC BAA-595 / MGAS315).